A 422-amino-acid polypeptide reads, in one-letter code: Kynurenine--oxoglutarate transaminase 1 (422 aa).

Substrate-binding residues include glycine 36 and asparagine 185. Lysine 247 is subject to N6-(pyridoxal phosphate)lysine. Arginine 398 contributes to the substrate binding site.

It belongs to the class-I pyridoxal-phosphate-dependent aminotransferase family. Homodimer. It depends on pyridoxal 5'-phosphate as a cofactor.

It localises to the cytoplasm. It is found in the cytosol. The enzyme catalyses L-kynurenine + 2-oxoglutarate = kynurenate + L-glutamate + H2O. It carries out the reaction 3-phenylpyruvate + L-glutamine = 2-oxoglutaramate + L-phenylalanine. The catalysed reaction is an S-substituted L-cysteine + H2O = a thiol + pyruvate + NH4(+). Its pathway is amino-acid degradation; L-kynurenine degradation; kynurenate from L-kynurenine: step 1/2. With respect to regulation, inhibited by tryptophan, indole-3-pyruvic acid, 3-indolepropionic acid, DL-indole-3-lactic acid, indole-3-acetic acid (IAC), amino-oxyacetate (AOAA), aminooxy-phenylpropionic acid (AOPP) and Tris. Catalyzes the irreversible transamination of the L-tryptophan metabolite L-kynurenine to form kynurenic acid (KA), an intermediate in the tryptophan catabolic pathway which is also a broad spectrum antagonist of the three ionotropic excitatory amino acid receptors among others. Also metabolizes the cysteine conjugates of certain halogenated alkenes and alkanes to form reactive metabolites. Catalyzes the beta-elimination of S-conjugates and Se-conjugates of L-(seleno)cysteine, resulting in the cleavage of the C-S or C-Se bond. The protein is Kynurenine--oxoglutarate transaminase 1 of Homo sapiens (Human).